Consider the following 161-residue polypeptide: Nucleotide-binding protein Pnec_0318 (161 aa).

The protein belongs to the YajQ family.

Functionally, nucleotide-binding protein. The polypeptide is Nucleotide-binding protein Pnec_0318 (Polynucleobacter necessarius subsp. necessarius (strain STIR1)).